A 193-amino-acid polypeptide reads, in one-letter code: Acyl carrier protein phosphodiesterase (193 aa).

Belongs to the AcpH family.

It carries out the reaction holo-[ACP] + H2O = apo-[ACP] + (R)-4'-phosphopantetheine + H(+). In terms of biological role, converts holo-ACP to apo-ACP by hydrolytic cleavage of the phosphopantetheine prosthetic group from ACP. The chain is Acyl carrier protein phosphodiesterase from Shigella boydii serotype 4 (strain Sb227).